Reading from the N-terminus, the 307-residue chain is Quinolinate synthase (307 aa).

H23 and S40 together coordinate iminosuccinate. Position 86 (C86) interacts with [4Fe-4S] cluster. Residues 112–114 (YVN) and S129 contribute to the iminosuccinate site. C173 lines the [4Fe-4S] cluster pocket. Iminosuccinate-binding positions include 199-201 (HPE) and T216. C265 is a binding site for [4Fe-4S] cluster.

The protein belongs to the quinolinate synthase family. Type 2 subfamily. [4Fe-4S] cluster is required as a cofactor.

The protein resides in the cytoplasm. It catalyses the reaction iminosuccinate + dihydroxyacetone phosphate = quinolinate + phosphate + 2 H2O + H(+). It functions in the pathway cofactor biosynthesis; NAD(+) biosynthesis; quinolinate from iminoaspartate: step 1/1. Catalyzes the condensation of iminoaspartate with dihydroxyacetone phosphate to form quinolinate. This Methanocaldococcus jannaschii (strain ATCC 43067 / DSM 2661 / JAL-1 / JCM 10045 / NBRC 100440) (Methanococcus jannaschii) protein is Quinolinate synthase.